Consider the following 78-residue polypeptide: Small ribosomal subunit protein eS17 (78 aa).

It belongs to the eukaryotic ribosomal protein eS17 family.

The polypeptide is Small ribosomal subunit protein eS17 (Sulfurisphaera tokodaii (strain DSM 16993 / JCM 10545 / NBRC 100140 / 7) (Sulfolobus tokodaii)).